The sequence spans 120 residues: Glutamate--tRNA ligase (120 aa).

It belongs to the class-I aminoacyl-tRNA synthetase family. Glutamate--tRNA ligase type 1 subfamily. As to quaternary structure, monomer.

The protein resides in the cytoplasm. It carries out the reaction tRNA(Glu) + L-glutamate + ATP = L-glutamyl-tRNA(Glu) + AMP + diphosphate. Catalyzes the attachment of glutamate to tRNA(Glu) in a two-step reaction: glutamate is first activated by ATP to form Glu-AMP and then transferred to the acceptor end of tRNA(Glu). The protein is Glutamate--tRNA ligase (gltX) of Staphylococcus xylosus.